Reading from the N-terminus, the 103-residue chain is Matrix Gla protein (103 aa).

A signal peptide spans 1-19 (MKSLVLLAILAALAVVTLC). At Glu21 the chain carries 4-carboxyglutamate. Phosphoserine is present on residues Ser22, Ser25, and Ser28. Residues 51–97 (RAKVQERIRERSKPVHELNREACDDYRLCERYAMVYGYNAAYNRYFR) enclose the Gla domain. 4 positions are modified to 4-carboxyglutamate: Glu56, Glu60, Glu67, and Glu71. The cysteines at positions 73 and 79 are disulfide-linked. Residues 97-103 (RERRGAK) constitute a propeptide, removed in mature form; probably by carboxypeptidase N.

The protein belongs to the osteocalcin/matrix Gla protein family. Post-translationally, requires vitamin K-dependent gamma-carboxylation for its function.

It is found in the secreted. Functionally, associates with the organic matrix of bone and cartilage. Thought to act as an inhibitor of bone formation. The polypeptide is Matrix Gla protein (MGP) (Pongo abelii (Sumatran orangutan)).